A 452-amino-acid chain; its full sequence is UDP-N-acetylmuramate--L-alanine ligase (452 aa).

121–127 contacts ATP; it reads GTHGKTT.

It belongs to the MurCDEF family.

The protein resides in the cytoplasm. The enzyme catalyses UDP-N-acetyl-alpha-D-muramate + L-alanine + ATP = UDP-N-acetyl-alpha-D-muramoyl-L-alanine + ADP + phosphate + H(+). It participates in cell wall biogenesis; peptidoglycan biosynthesis. Its function is as follows. Cell wall formation. This chain is UDP-N-acetylmuramate--L-alanine ligase, found in Christiangramia forsetii (strain DSM 17595 / CGMCC 1.15422 / KT0803) (Gramella forsetii).